A 413-amino-acid chain; its full sequence is Multifunctional CCA protein (413 aa).

ATP-binding residues include Gly-8 and Arg-11. CTP contacts are provided by Gly-8 and Arg-11. Mg(2+) contacts are provided by Glu-21 and Asp-23. The ATP site is built by Arg-91, Arg-137, and Arg-140. Residues Arg-91, Arg-137, and Arg-140 each coordinate CTP. Residues 228–329 (TGEHTLLALA…LKLLEGLDLF (102 aa)) form the HD domain.

It belongs to the tRNA nucleotidyltransferase/poly(A) polymerase family. Bacterial CCA-adding enzyme type 1 subfamily. As to quaternary structure, monomer. Can also form homodimers and oligomers. Mg(2+) serves as cofactor. The cofactor is Ni(2+).

The enzyme catalyses a tRNA precursor + 2 CTP + ATP = a tRNA with a 3' CCA end + 3 diphosphate. It catalyses the reaction a tRNA with a 3' CCA end + 2 CTP + ATP = a tRNA with a 3' CCACCA end + 3 diphosphate. Its function is as follows. Catalyzes the addition and repair of the essential 3'-terminal CCA sequence in tRNAs without using a nucleic acid template. Adds these three nucleotides in the order of C, C, and A to the tRNA nucleotide-73, using CTP and ATP as substrates and producing inorganic pyrophosphate. tRNA 3'-terminal CCA addition is required both for tRNA processing and repair. Also involved in tRNA surveillance by mediating tandem CCA addition to generate a CCACCA at the 3' terminus of unstable tRNAs. While stable tRNAs receive only 3'-terminal CCA, unstable tRNAs are marked with CCACCA and rapidly degraded. The protein is Multifunctional CCA protein of Alkalilimnicola ehrlichii (strain ATCC BAA-1101 / DSM 17681 / MLHE-1).